Here is a 380-residue protein sequence, read N- to C-terminus: 3-isopropylmalate dehydrogenase (380 aa).

NAD(+) is bound at residue 79-90; the sequence is GPEWAGVHPTPE. Positions 97, 107, 136, and 229 each coordinate substrate. The Mg(2+) site is built by D229, D254, and D258. 294–306 is an NAD(+) binding site; sequence GSAPDISGKGLAN.

It belongs to the isocitrate and isopropylmalate dehydrogenases family. Homodimer. The cofactor is Mg(2+). Mn(2+) is required as a cofactor.

The protein localises to the cytoplasm. It carries out the reaction (2R,3S)-3-isopropylmalate + NAD(+) = 4-methyl-2-oxopentanoate + CO2 + NADH. The protein operates within amino-acid biosynthesis; L-leucine biosynthesis; L-leucine from 3-methyl-2-oxobutanoate: step 3/4. Functionally, catalyzes the oxidation of 3-carboxy-2-hydroxy-4-methylpentanoate (3-isopropylmalate) to 3-carboxy-4-methyl-2-oxopentanoate. The product decarboxylates to 4-methyl-2 oxopentanoate. The protein is 3-isopropylmalate dehydrogenase (LEU2) of Hapsidospora chrysogena (Acremonium chrysogenum).